A 156-amino-acid polypeptide reads, in one-letter code: Large ribosomal subunit protein uL15 (156 aa).

The span at 1–11 (MKLNDLRDKPG) shows a compositional bias: basic and acidic residues. The segment at 1–40 (MKLNDLRDKPGSVKARKRVGRGIGSGTGKTGGRGVKGQKS) is disordered. The segment covering 21–35 (RGIGSGTGKTGGRGV) has biased composition (gly residues).

It belongs to the universal ribosomal protein uL15 family. In terms of assembly, part of the 50S ribosomal subunit.

Binds to the 23S rRNA. The protein is Large ribosomal subunit protein uL15 of Brucella anthropi (strain ATCC 49188 / DSM 6882 / CCUG 24695 / JCM 21032 / LMG 3331 / NBRC 15819 / NCTC 12168 / Alc 37) (Ochrobactrum anthropi).